Here is a 179-residue protein sequence, read N- to C-terminus: Inosine/xanthosine triphosphatase (179 aa).

Glu-71 contacts Mg(2+). A substrate-binding site is contributed by 71–72 (EA).

Belongs to the YjjX NTPase family. As to quaternary structure, homodimer. Mg(2+) serves as cofactor. The cofactor is Mn(2+).

The enzyme catalyses XTP + H2O = XDP + phosphate + H(+). It catalyses the reaction ITP + H2O = IDP + phosphate + H(+). Functionally, phosphatase that hydrolyzes non-canonical purine nucleotides such as XTP and ITP to their respective diphosphate derivatives. Probably excludes non-canonical purines from DNA/RNA precursor pool, thus preventing their incorporation into DNA/RNA and avoiding chromosomal lesions. This chain is Inosine/xanthosine triphosphatase, found in Shewanella sp. (strain ANA-3).